Consider the following 217-residue polypeptide: Ufm1-specific protease 1 (217 aa).

Catalysis depends on residues C53, D175, and H177.

Belongs to the peptidase C78 family. Widely expressed. Expressed at higher level in brain, heart, kidney and skeletal muscle.

Its subcellular location is the cytoplasm. The protein resides in the cytosol. Thiol-dependent isopeptidase that specifically mediate the processing of UFM1 precursors as well as the deconjugation of UFM1 from target proteins. Mainly responsible for the maturation of the UFM1 precursor, a prerequisite for conjugation reactions. This is Ufm1-specific protease 1 from Mus musculus (Mouse).